The primary structure comprises 207 residues: LexA repressor (207 aa).

The H-T-H motif DNA-binding region spans 28 to 48 (RAEIARELGFRSANAAEEHLK). Catalysis depends on for autocatalytic cleavage activity residues Ser-124 and Lys-161.

It belongs to the peptidase S24 family. As to quaternary structure, homodimer.

It catalyses the reaction Hydrolysis of Ala-|-Gly bond in repressor LexA.. Its function is as follows. Represses a number of genes involved in the response to DNA damage (SOS response), including recA and lexA. In the presence of single-stranded DNA, RecA interacts with LexA causing an autocatalytic cleavage which disrupts the DNA-binding part of LexA, leading to derepression of the SOS regulon and eventually DNA repair. The protein is LexA repressor of Vibrio vulnificus (strain CMCP6).